The following is a 191-amino-acid chain: TATA-box-binding protein (191 aa).

2 consecutive repeat copies span residues 18-94 (LQNV…AKIV) and 108-185 (IQNI…YPVL).

This sequence belongs to the TBP family. In terms of assembly, belongs to the TFIID complex together with the TBP-associated factors (TAFs). Binds DNA as monomer.

Its subcellular location is the nucleus. General transcription factor that functions at the core of the DNA-binding multiprotein factor TFIID. Binding of TFIID to the TATA box is the initial transcriptional step of the pre-initiation complex (PIC), playing a role in the activation of eukaryotic genes transcribed by RNA polymerase II. In Acetabularia peniculus (Green alga), this protein is TATA-box-binding protein.